The primary structure comprises 273 residues: Type IV secretion system protein PtlF (273 aa).

A signal peptide spans 1–20 (MMAARMMAAGLAATALSAHA).

It belongs to the TrbG/VirB9 family. As to quaternary structure, forms a complex with PtlI.

The protein localises to the cell outer membrane. In terms of biological role, component of the type IV secretion system ptl required for secretion of assembled pertussis toxin (PTX) through the outer membrane. The sequence is that of Type IV secretion system protein PtlF (ptlF) from Bordetella pertussis (strain Tohama I / ATCC BAA-589 / NCTC 13251).